The following is a 418-amino-acid chain: Dual-specificity RNA methyltransferase RlmN (418 aa).

The segment at 1–21 (MADTSLMPIPGQVDPVPAPRD) is disordered. E122 (proton acceptor) is an active-site residue. In terms of domain architecture, Radical SAM core spans 128 to 383 (DADRGTLCVS…APVRTPRGRD (256 aa)). C135 and C388 are oxidised to a cystine. 3 residues coordinate [4Fe-4S] cluster: C142, C146, and C149. S-adenosyl-L-methionine is bound by residues 212–213 (GE), S244, 266–268 (SLH), and N345. The S-methylcysteine intermediate role is filled by C388. Positions 393–418 (TAAQKKSRAERDREAAAEAEAAASQA) are disordered. Residues 399-408 (SRAERDREAA) show a composition bias toward basic and acidic residues.

The protein belongs to the radical SAM superfamily. RlmN family. [4Fe-4S] cluster serves as cofactor.

It is found in the cytoplasm. It carries out the reaction adenosine(2503) in 23S rRNA + 2 reduced [2Fe-2S]-[ferredoxin] + 2 S-adenosyl-L-methionine = 2-methyladenosine(2503) in 23S rRNA + 5'-deoxyadenosine + L-methionine + 2 oxidized [2Fe-2S]-[ferredoxin] + S-adenosyl-L-homocysteine. The catalysed reaction is adenosine(37) in tRNA + 2 reduced [2Fe-2S]-[ferredoxin] + 2 S-adenosyl-L-methionine = 2-methyladenosine(37) in tRNA + 5'-deoxyadenosine + L-methionine + 2 oxidized [2Fe-2S]-[ferredoxin] + S-adenosyl-L-homocysteine. Specifically methylates position 2 of adenine 2503 in 23S rRNA and position 2 of adenine 37 in tRNAs. m2A2503 modification seems to play a crucial role in the proofreading step occurring at the peptidyl transferase center and thus would serve to optimize ribosomal fidelity. This chain is Dual-specificity RNA methyltransferase RlmN, found in Erythrobacter litoralis (strain HTCC2594).